Here is a 116-residue protein sequence, read N- to C-terminus: Outer membrane protein assembly factor BamE (116 aa).

The signal sequence occupies residues 1 to 22 (MITMRCKMLTAAAVMLAMLTAG). Cys23 carries the N-palmitoyl cysteine lipid modification. Cys23 is lipidated: S-diacylglycerol cysteine.

It belongs to the BamE family. As to quaternary structure, part of the Bam complex, which is composed of the outer membrane protein BamA, and four lipoproteins BamB, BamC, BamD and BamE.

It is found in the cell outer membrane. Its function is as follows. Part of the outer membrane protein assembly complex, which is involved in assembly and insertion of beta-barrel proteins into the outer membrane. The polypeptide is Outer membrane protein assembly factor BamE (Yersinia pestis).